Here is a 52-residue protein sequence, read N- to C-terminus: Ribosome biogenesis protein Nop10 (52 aa).

The protein belongs to the NOP10 family.

Involved in ribosome biogenesis; more specifically in 18S rRNA pseudouridylation and in cleavage of pre-rRNA. This Methanococcus vannielii (strain ATCC 35089 / DSM 1224 / JCM 13029 / OCM 148 / SB) protein is Ribosome biogenesis protein Nop10.